The sequence spans 337 residues: Ornithine carbamoyltransferase, catabolic (337 aa).

Residues 57–60 (STRT), glutamine 84, arginine 108, and 135–138 (HPTQ) each bind carbamoyl phosphate. Residues asparagine 167, aspartate 231, and 235 to 236 (SM) contribute to the L-ornithine site. Carbamoyl phosphate is bound by residues 272–273 (CL) and arginine 317.

It belongs to the aspartate/ornithine carbamoyltransferase superfamily. OTCase family.

Its subcellular location is the cytoplasm. The enzyme catalyses carbamoyl phosphate + L-ornithine = L-citrulline + phosphate + H(+). Its pathway is amino-acid degradation; L-arginine degradation via ADI pathway; carbamoyl phosphate from L-arginine: step 2/2. Reversibly catalyzes the transfer of the carbamoyl group from carbamoyl phosphate (CP) to the N(epsilon) atom of ornithine (ORN) to produce L-citrulline. In Streptococcus agalactiae, this protein is Ornithine carbamoyltransferase, catabolic (arcB).